The following is a 157-amino-acid chain: DNA gyrase inhibitor (157 aa).

The protein belongs to the DNA gyrase inhibitor family. In terms of assembly, interacts with DNA gyrase.

The protein resides in the cytoplasm. Its function is as follows. Inhibits the supercoiling activity of DNA gyrase. Acts by inhibiting DNA gyrase at an early step, prior to (or at the step of) binding of DNA by the gyrase. It protects cells against toxins that target DNA gyrase, by inhibiting activity of these toxins and reducing the formation of lethal double-strand breaks in the cell. This Klebsiella pneumoniae (strain 342) protein is DNA gyrase inhibitor.